A 542-amino-acid chain; its full sequence is Excitatory amino acid transporter 1 (542 aa).

The Cytoplasmic segment spans residues 1–47 (MTKSNGEEARLGGRMERFQQGVRKRTLLAKKKVQNITKEDVKSYLFR). A helical membrane pass occupies residues 48 to 68 (NAFVLLTVTAVIVGTILGFTL). The Extracellular segment spans residues 69–86 (RPYRMSYREVKYFSFPGE). Residues 87–108 (LLMRMLQMLVLPLIISSLVTGM) traverse the membrane as a helical segment. The Cytoplasmic segment spans residues 109 to 122 (AALDSKASGKMGMR). A helical transmembrane segment spans residues 123-145 (AVVYYMTTTIIAVVIGIIIVIII). The Extracellular portion of the chain corresponds to 146–236 (HPGKGTKENM…ITEELVPVPG (91 aa)). Residues 237-260 (SVNGVNALGLVVFSMCFGFVIGNM) traverse the membrane as a helical segment. Residues 261–269 (KEQGQALRE) lie on the Cytoplasmic side of the membrane. The helical transmembrane segment at 270–297 (FFDSLNEAIMRLVAVIMWYAPLGILFLI) threads the bilayer. At 298 to 318 (AGKIVEMEDMGVIGGQLAMYT) the chain is on the extracellular side. Residues 319 to 340 (VTVIVGLLIHAVIVLPLLYFLV) form a helical membrane-spanning segment. Topologically, residues 341–345 (TRKNP) are cytoplasmic. Residues 346 to 376 (WVFIGGLLQALITALGTSSSSATLPITFKCL) constitute an intramembrane region (discontinuously helical). 363–365 (SSS) lines the L-aspartate pocket. The Cytoplasmic segment spans residues 377–385 (EENNGVDKR). Residues 386 to 412 (VTRFVLPVGATINMDGTALYEALAAIF) traverse the membrane as a helical segment. Na(+)-binding residues include G394, T396, and N398. Residue T402 participates in L-aspartate binding. Residues 413-425 (IAQVNNFELNFGQ) are Extracellular-facing. Residues 426–459 (IITISITATAASIGAAGIPQAGLVTMVIVLTSVG) constitute an intramembrane region (discontinuously helical). L-aspartate is bound at residue 443-447 (IPQAG). Residues 460–472 (LPTDDITLIIAVD) are Extracellular-facing. Residues 473–494 (WFLDRLRTTTNVLGDSLGAGIV) form a helical membrane-spanning segment. L-aspartate is bound by residues D476 and N483. Positions 483 and 487 each coordinate Na(+). The Cytoplasmic segment spans residues 495–542 (EHLSRHELKNRDVEMGNSVIEENEMKKPYQLISQESEIEKSMDSETKM). Residue S512 is modified to Phosphoserine.

It belongs to the dicarboxylate/amino acid:cation symporter (DAACS) (TC 2.A.23) family. SLC1A3 subfamily. In terms of assembly, homotrimer. Glycosylated.

It localises to the cell membrane. The enzyme catalyses K(+)(in) + L-glutamate(out) + 3 Na(+)(out) + H(+)(out) = K(+)(out) + L-glutamate(in) + 3 Na(+)(in) + H(+)(in). It carries out the reaction K(+)(in) + L-aspartate(out) + 3 Na(+)(out) + H(+)(out) = K(+)(out) + L-aspartate(in) + 3 Na(+)(in) + H(+)(in). It catalyses the reaction D-aspartate(out) + K(+)(in) + 3 Na(+)(out) + H(+)(out) = D-aspartate(in) + K(+)(out) + 3 Na(+)(in) + H(+)(in). In terms of biological role, sodium-dependent, high-affinity amino acid transporter that mediates the uptake of L-glutamate and also L-aspartate and D-aspartate. Functions as a symporter that transports one amino acid molecule together with two or three Na(+) ions and one proton, in parallel with the counter-transport of one K(+) ion. Plays a redundant role in the rapid removal of released glutamate from the synaptic cleft, which is essential for terminating the postsynaptic action of glutamate. The protein is Excitatory amino acid transporter 1 (SLC1A3) of Bos taurus (Bovine).